The following is a 342-amino-acid chain: Serine/threonine-protein kinase-transforming protein mos (342 aa).

The Protein kinase domain maps to 63–338 (VCLMHRLGSG…LLQRDLKAFR (276 aa)). ATP is bound by residues 69–77 (LGSGGFGSV) and K90. D198 acts as the Proton acceptor in catalysis.

This sequence belongs to the protein kinase superfamily. Ser/Thr protein kinase family.

It catalyses the reaction L-seryl-[protein] + ATP = O-phospho-L-seryl-[protein] + ADP + H(+). It carries out the reaction L-threonyl-[protein] + ATP = O-phospho-L-threonyl-[protein] + ADP + H(+). This is Serine/threonine-protein kinase-transforming protein mos (V-MOS) from Myeloproliferative sarcoma virus (isolate ts159).